A 441-amino-acid chain; its full sequence is tRNA (adenine(37)-N6)-methyltransferase (441 aa).

The 139-residue stretch at 30-168 folds into the TsaA-like domain; the sequence is TEPVGYLESC…YIAEYDSPQN (139 aa). S-adenosyl-L-methionine contacts are provided by residues 47-49, 90-91, Arg117, Leu127, and 148-151; these read PRQ, HK, and IHGT. Positions 179-192 are enriched in polar residues; it reads QNNQHTPNTVSQSD. 2 disordered regions span residues 179–231 and 264–284; these read QNNQ…EENY and SSVA…SEKG.

This sequence belongs to the tRNA methyltransferase O family.

The catalysed reaction is N(6)-L-threonylcarbamoyladenosine(37) in tRNA + S-adenosyl-L-methionine = N(6)-methyl,N(6)-L-threonylcarbamoyladenosine(37) in tRNA + S-adenosyl-L-homocysteine + H(+). In terms of biological role, S-adenosyl-L-methionine-dependent methyltransferase responsible for the addition of the methyl group in the formation of N6-methyl-N6-threonylcarbamoyladenosine at position 37 (m(6)t(6)A37) of the tRNA anticodon loop of tRNA(Ser)(GCU). The methyl group of m(6)t(6)A37 may improve the efficiency of the tRNA decoding ability. The protein is tRNA (adenine(37)-N6)-methyltransferase of Homo sapiens (Human).